A 556-amino-acid polypeptide reads, in one-letter code: 2-succinyl-5-enolpyruvyl-6-hydroxy-3-cyclohexene-1-carboxylate synthase (556 aa).

Belongs to the TPP enzyme family. MenD subfamily. In terms of assembly, homodimer. Mg(2+) is required as a cofactor. Requires Mn(2+) as cofactor. Thiamine diphosphate serves as cofactor.

The enzyme catalyses isochorismate + 2-oxoglutarate + H(+) = 5-enolpyruvoyl-6-hydroxy-2-succinyl-cyclohex-3-ene-1-carboxylate + CO2. It participates in quinol/quinone metabolism; 1,4-dihydroxy-2-naphthoate biosynthesis; 1,4-dihydroxy-2-naphthoate from chorismate: step 2/7. The protein operates within quinol/quinone metabolism; menaquinone biosynthesis. Catalyzes the thiamine diphosphate-dependent decarboxylation of 2-oxoglutarate and the subsequent addition of the resulting succinic semialdehyde-thiamine pyrophosphate anion to isochorismate to yield 2-succinyl-5-enolpyruvyl-6-hydroxy-3-cyclohexene-1-carboxylate (SEPHCHC). This chain is 2-succinyl-5-enolpyruvyl-6-hydroxy-3-cyclohexene-1-carboxylate synthase, found in Shigella boydii serotype 4 (strain Sb227).